Here is a 354-residue protein sequence, read N- to C-terminus: Selenide, water dikinase (354 aa).

The active site involves U21. A non-standard amino acid (selenocysteine) is located at residue U21. ATP is bound by residues K24 and T51–D53. D54 is a Mg(2+) binding site. ATP is bound by residues D71, D94, and G141–T143. D94 lines the Mg(2+) pocket. Residue D229 participates in Mg(2+) binding.

The protein belongs to the selenophosphate synthase 1 family. Class I subfamily. As to quaternary structure, homodimer. The cofactor is Mg(2+).

It carries out the reaction hydrogenselenide + ATP + H2O = selenophosphate + AMP + phosphate + 2 H(+). Synthesizes selenophosphate from selenide and ATP. The polypeptide is Selenide, water dikinase (Treponema denticola (strain ATCC 35405 / DSM 14222 / CIP 103919 / JCM 8153 / KCTC 15104)).